The sequence spans 255 residues: Fumarate reductase cytochrome b subunit (255 aa).

The next 5 membrane-spanning stretches (helical) occupy residues 33–53 (TGLI…SILI), 78–98 (IVSV…FLAL), 126–146 (WFIQ…HLFV), 168–188 (FWLL…IGLY), and 208–228 (VKWA…GAYI). 4 residues coordinate heme b: histidine 44, histidine 93, histidine 143, and histidine 182.

This sequence belongs to the diheme cytochrome b FrdC family. Part of an enzyme complex containing three subunits: a flavoprotein (frdA), an iron-sulfur protein (frdB), and diheme cytochrome b (frdC). Requires heme b as cofactor.

The protein localises to the cell inner membrane. The fumarate reductase enzyme complex is required for fumarate respiration. This subunit anchors the complex in the membrane and binds a diheme cytochrome b. The sequence is that of Fumarate reductase cytochrome b subunit (frdC) from Helicobacter pylori (strain ATCC 700392 / 26695) (Campylobacter pylori).